The chain runs to 229 residues: Putative ABC transporter permease protein ORF1 (229 aa).

In terms of domain architecture, ABC transmembrane type-1 spans 23 to 214 (ALNSLLVALA…LPSLAFFALV (192 aa)). 5 consecutive transmembrane segments (helical) span residues 27-47 (LLVA…MAYV), 62-82 (WVVV…FLVL), 91-111 (LTGL…WMLA), 150-170 (ATAL…LVLL), and 194-214 (SPAG…FALV).

The protein belongs to the binding-protein-dependent transport system permease family. MalFG subfamily.

Its subcellular location is the cell membrane. May participate in oleandomycin secretion during antibiotic production. The protein is Putative ABC transporter permease protein ORF1 of Streptomyces antibioticus.